A 239-amino-acid chain; its full sequence is RNA polymerase sigma-E factor (239 aa).

Positions 1-29 (MKKLKLRLTHLWYKLLMKLGLKSDEVYYI) are cleaved as a propeptide — removed by SpoIIGA. Residues 86–99 (DLISIGTIGLIKAV) carry the Polymerase core binding motif. The segment at residues 206 to 225 (QKDVADMMGISQSYISRLEK) is a DNA-binding region (H-T-H motif).

Belongs to the sigma-70 factor family. Proteolytically cleaved in the N-terminus by SpoIIGA to yield the active peptide.

In terms of biological role, sigma factors are initiation factors that promote the attachment of RNA polymerase to specific initiation sites and are then released. This sigma factor is responsible for the expression of sporulation specific genes. The polypeptide is RNA polymerase sigma-E factor (sigE) (Bacillus subtilis (strain 168)).